Consider the following 256-residue polypeptide: Thrombin-like enzyme cerastocytin (256 aa).

The signal sequence occupies residues 1-18 (MVLISVLASLLVLQLSYA). A propeptide spanning residues 19 to 24 (QKSSEL) is cleaved from the precursor. One can recognise a Peptidase S1 domain in the interval 25–247 (VIGGAECNIN…YTDWIRNIIA (223 aa)). Intrachain disulfides connect Cys-31/Cys-161, Cys-98/Cys-254, Cys-140/Cys-208, Cys-172/Cys-187, and Cys-198/Cys-223. A glycan (N-linked (GlcNAc...) asparagine) is linked at Asn-44. Active-site charge relay system residues include His-65 and Asp-108. N-linked (GlcNAc...) asparagine glycosylation is found at Asn-119, Asn-120, and Asn-152. Ser-202 acts as the Charge relay system in catalysis.

It belongs to the peptidase S1 family. Snake venom subfamily. Monomer. Expressed by the venom gland.

The protein localises to the secreted. With respect to regulation, its platelets aggregating activity is inhibited by chlorpromazine, theophylline mepacrine. Its platelet aggregating activity and its amidolytic activity are inhibited by PMSF, TPCK, TLCK and soybean trypsin inhibitors. Is unaffected by hirudin or by antithrombin-III in the presence of heparin. Functionally, thrombin-like snake venom serine protease which potently induces platelet aggregation and has fibrinogenolytic activities. Clots purified fibrinogen and hydrolyzes alpha-chains (FGA). High concentrations of this enzyme also cleave prothrombin (F2) and factor X (F10). Is also able to activate factor XIII (F8). This Cerastes cerastes (Horned desert viper) protein is Thrombin-like enzyme cerastocytin.